We begin with the raw amino-acid sequence, 614 residues long: Aspartate--tRNA ligase (614 aa).

Glu-174 serves as a coordination point for L-aspartate. Positions Gln-198–Lys-201 are aspartate. L-aspartate is bound at residue Arg-220. ATP contacts are provided by residues Arg-220–Glu-222 and Gln-229. His-448 contributes to the L-aspartate binding site. Position 482 (Glu-482) interacts with ATP. Position 489 (Arg-489) interacts with L-aspartate. Gly-534–Arg-537 serves as a coordination point for ATP.

The protein belongs to the class-II aminoacyl-tRNA synthetase family. Type 1 subfamily. As to quaternary structure, homodimer.

Its subcellular location is the cytoplasm. It carries out the reaction tRNA(Asp) + L-aspartate + ATP = L-aspartyl-tRNA(Asp) + AMP + diphosphate. In terms of biological role, catalyzes the attachment of L-aspartate to tRNA(Asp) in a two-step reaction: L-aspartate is first activated by ATP to form Asp-AMP and then transferred to the acceptor end of tRNA(Asp). This Lactobacillus acidophilus (strain ATCC 700396 / NCK56 / N2 / NCFM) protein is Aspartate--tRNA ligase.